The chain runs to 780 residues: Zinc finger protein GLIS3 (780 aa).

Polar residues-rich tracts occupy residues 80–92 (PSLSSSHSSQNGT) and 106–115 (VSGNSVSNSL). Disordered stretches follow at residues 80 to 148 (PSLS…KKRA) and 290 to 315 (PSALPLPLPPPQGPPPPYHAHPHLHH). Residues 135–148 (SATRAHSTRSKKRA) show a composition bias toward basic residues. Over residues 293–308 (LPLPLPPPQGPPPPYH) the composition is skewed to pro residues. A C2H2-type 1 zinc finger spans residues 345–370 (HCCRWIDCSALYDQQEELVRHIEKVH). A C2H2-type 2; atypical zinc finger spans residues 379-406 (FTCFWTGCPRRYKPFNARYKLLIHMRVH). 3 consecutive C2H2-type zinc fingers follow at residues 412–436 (NKCTFEGCKKAFSRLENLKIHLRSH), 442–466 (YLCQHPGCQKAFSNSSDRAKHQRTH), and 472–496 (YACQIPGCTKRYTDPSSLRKHVKAH). Disordered regions lie at residues 485–512 (DPSSLRKHVKAHSSREQQARKKLRSSTE) and 527–670 (LQPA…QPNG). A Bipartite nuclear localization signal motif is present at residues 490–506 (RKHVKAHSSREQQARKK). Residues 497–512 (SSREQQARKKLRSSTE) show a composition bias toward basic and acidic residues. Residues 567-577 (HSTRSGTAAGA) show a composition bias toward low complexity. Residues 593 to 605 (VQGSPHNPSSQLP) are compositionally biased toward polar residues.

Belongs to the GLI C2H2-type zinc-finger protein family. In the embryo, expressed at high levels in the kidney and testis. In the adult, expressed at high levels in the kidney and uterus and at lower levels in the brain, lung, skeletal muscle and pancreas.

It localises to the nucleus. Functionally, acts both as a repressor and activator of transcription. Binds to the consensus sequence 5'-GACCACCCAC-3'. The chain is Zinc finger protein GLIS3 from Mus musculus (Mouse).